Reading from the N-terminus, the 108-residue chain is Nucleoid-associated protein BTH_I2220 (108 aa).

This sequence belongs to the YbaB/EbfC family. Homodimer.

The protein localises to the cytoplasm. It is found in the nucleoid. Binds to DNA and alters its conformation. May be involved in regulation of gene expression, nucleoid organization and DNA protection. The protein is Nucleoid-associated protein BTH_I2220 of Burkholderia thailandensis (strain ATCC 700388 / DSM 13276 / CCUG 48851 / CIP 106301 / E264).